The sequence spans 347 residues: Eukaryotic translation initiation factor 3 subunit H (347 aa).

Residues 1–142 (MKIMKHCSQT…LRAFRLSPRF (142 aa)) enclose the MPN domain.

The protein belongs to the eIF-3 subunit H family. As to quaternary structure, component of the eukaryotic translation initiation factor 3 (eIF-3) complex.

It localises to the cytoplasm. Component of the eukaryotic translation initiation factor 3 (eIF-3) complex, which is involved in protein synthesis of a specialized repertoire of mRNAs and, together with other initiation factors, stimulates binding of mRNA and methionyl-tRNAi to the 40S ribosome. The eIF-3 complex specifically targets and initiates translation of a subset of mRNAs involved in cell proliferation. This Neosartorya fischeri (strain ATCC 1020 / DSM 3700 / CBS 544.65 / FGSC A1164 / JCM 1740 / NRRL 181 / WB 181) (Aspergillus fischerianus) protein is Eukaryotic translation initiation factor 3 subunit H.